The chain runs to 447 residues: MKKLRSYYSNVRHHQNHHHHHHHHSNIVSSERKWIFFPLLIGSIFALFLLFLTTTLTSPTGGVRFLPFTRPVLLTGSGSSAFVESKIKPQQISSLPSPPRFAYLISGSAGDGKSLRRTLLALYHPNNRYVVHLDRESSREEREELHGYIKNSSLFRRFMNVHMIEKANLVTYRGPTMVANTLHAAAILLREGADWDWFINLSSSDYPLVTQDDLLHIFSHLPRDLNFIDHTSNIGWKASQRAKPVIIDPGLYLNKKSDVFWVTQRRSIPTAFKLFTGSAWMALSRPFVDYCIWGWDNLPRTVLMYYSNFLSSPEGYFHTVLCNAEEFRNTTVNSDLHFISWDNPPKQHPHHLTLTDMTKMVNSNAPFARKFRREDPVLDKIDDELLNRGPGMITPGGWCIGSHENGSDPCAVIGDTDVIRPGPGARRLENLVTSLLSTENFRSKQCK.

At 1 to 33 (MKKLRSYYSNVRHHQNHHHHHHHHSNIVSSERK) the chain is on the cytoplasmic side. Residues 34-54 (WIFFPLLIGSIFALFLLFLTT) traverse the membrane as a helical; Signal-anchor for type II membrane protein segment. The Lumenal segment spans residues 55–447 (TLTSPTGGVR…TENFRSKQCK (393 aa)). N-linked (GlcNAc...) asparagine glycosylation is found at N151, N200, N329, and N405.

The protein belongs to the glycosyltransferase 14 family.

It localises to the golgi apparatus membrane. Functionally, beta-glucuronosyltransferase involved in the biosynthesis of type II arabinogalactan (AG). Modifies both the beta-1,6-linked galactan and beta-1,3-linked galactan present in type II AG. Transfers glucuronate to beta-1,6-galactooligosaccharides with degrees of polymerization ranging from 3 to 11. Transfers glucuronate to beta-1,3-galactooligosaccharides with degrees of polymerization ranging from 5 to 7. The addition of glucuronate at the O6 position may terminate galactose chain extension. Required for cell elongation during seedling growth. In Arabidopsis thaliana (Mouse-ear cress), this protein is Beta-glucuronosyltransferase GlcAT14A.